A 426-amino-acid polypeptide reads, in one-letter code: Glutamyl-tRNA reductase (426 aa).

Substrate is bound by residues 49 to 52, serine 101, 106 to 108, and glutamine 112; these read TCNR and EPQ. Cysteine 50 (nucleophile) is an active-site residue. 181–186 lines the NADP(+) pocket; that stretch reads GAGETI. The tract at residues 405 to 426 is disordered; that stretch reads RLFPEKPGYQHPPHSYPDREDR.

Belongs to the glutamyl-tRNA reductase family. As to quaternary structure, homodimer.

It carries out the reaction (S)-4-amino-5-oxopentanoate + tRNA(Glu) + NADP(+) = L-glutamyl-tRNA(Glu) + NADPH + H(+). It participates in porphyrin-containing compound metabolism; protoporphyrin-IX biosynthesis; 5-aminolevulinate from L-glutamyl-tRNA(Glu): step 1/2. In terms of biological role, catalyzes the NADPH-dependent reduction of glutamyl-tRNA(Glu) to glutamate 1-semialdehyde (GSA). This chain is Glutamyl-tRNA reductase, found in Xanthomonas axonopodis pv. citri (strain 306).